A 196-amino-acid chain; its full sequence is Phosphoheptose isomerase (196 aa).

The SIS domain occupies 36 to 196 (MAQALQAEGK…LIDQHLFGGA (161 aa)). Position 51 to 53 (51 to 53 (NGG)) interacts with substrate. His60 and Glu64 together coordinate Zn(2+). Substrate-binding positions include Glu64, 93 to 94 (ND), 119 to 121 (STS), Ser124, and Gln174. Residues Gln174 and His182 each coordinate Zn(2+).

Belongs to the SIS family. GmhA subfamily. Homotetramer. The cofactor is Zn(2+).

The protein localises to the cytoplasm. The catalysed reaction is 2 D-sedoheptulose 7-phosphate = D-glycero-alpha-D-manno-heptose 7-phosphate + D-glycero-beta-D-manno-heptose 7-phosphate. It functions in the pathway carbohydrate biosynthesis; D-glycero-D-manno-heptose 7-phosphate biosynthesis; D-glycero-alpha-D-manno-heptose 7-phosphate and D-glycero-beta-D-manno-heptose 7-phosphate from sedoheptulose 7-phosphate: step 1/1. Functionally, catalyzes the isomerization of sedoheptulose 7-phosphate in D-glycero-D-manno-heptose 7-phosphate. In Alkalilimnicola ehrlichii (strain ATCC BAA-1101 / DSM 17681 / MLHE-1), this protein is Phosphoheptose isomerase.